Here is a 125-residue protein sequence, read N- to C-terminus: Natriuretic peptide GNP1 (125 aa).

Residues 1-25 form the signal peptide; it reads MDPRLVRAGSLVLLLALLVQDQGAA. 2 disordered regions span residues 23-78 and 105-125; these read GAAH…PAFK and VSGM…TGKK. Residues 26-85 constitute a propeptide that is removed on maturation; it reads HPARAGQKYKPLIRRSEEDSQALGQEGDVAARAADEEEDAAGPGDALRQPAFKTLLASRE. Cys-94 and Cys-110 form a disulfide bridge.

This sequence belongs to the natriuretic peptide family. Expressed by the venom gland.

The protein resides in the secreted. Functionally, exhibits natriuretic and vasodepressor activity. Acts by stimulating cGMP. The polypeptide is Natriuretic peptide GNP1 (Varanus varius (Lace monitor lizard)).